The following is a 94-amino-acid chain: Conotoxin Qc6.1 (94 aa).

Positions 1–22 (MKLTCMMIVALLFLTAWTFVTA) are cleaved as a signal peptide. Residues 23–62 (VDSKNELENRGGWGQAGGWGKLFPMARDEMKNSEVSKLDN) constitute a propeptide that is removed on maturation. 3 cysteine pairs are disulfide-bonded: cysteine 66-cysteine 84, cysteine 73-cysteine 88, and cysteine 83-cysteine 92.

The protein belongs to the conotoxin O1 superfamily. As to expression, expressed by the venom duct.

The protein resides in the secreted. This is Conotoxin Qc6.1 from Conus quercinus (Oak cone).